A 383-amino-acid chain; its full sequence is MSETELRKRQAQFTRELHGDDIGKKTGLSALMSKNNSAQKEAVQKYLRNWDGRTDKDAEERRLEDYNEATHSYYNVVTDFYEYGWGSSFHFSRFYKGESFAASIARHEHYLAYKAGIQRGDLVLDVGCGVGGPAREIARFTGCNVIGLNNNDYQIAKAKYYAKKYNLSDQMDFVKGDFMKMDFEENTFDKVYAIEATCHAPKLEGVYSEIYKVLKPGGTFAVYEWVMTDKYDENNPEHRKIAYEIELGDGIPKMFHVDVARKALKNCGFEVLVSEDLADNDDEIPWYYPLTGEWKYVQNLANLATFFRTSYLGRQFTTAMVTVMEKLGLAPEGSKEVTAALENAAVGLVAGGKSKLFTPMMLFVARKPENAETPSQTSQEATQ.

S2 carries the post-translational modification N-acetylserine. Residue S99 is modified to Phosphoserine.

This sequence belongs to the class I-like SAM-binding methyltransferase superfamily. Erg6/SMT family. Interacts with ERG28.

It localises to the microsome. It is found in the mitochondrion. It catalyses the reaction zymosterol + S-adenosyl-L-methionine = fecosterol + S-adenosyl-L-homocysteine + H(+). It participates in steroid metabolism; ergosterol biosynthesis; ergosterol from zymosterol: step 1/5. In terms of biological role, sterol 24-C-methyltransferase; part of the third module of ergosterol biosynthesis pathway that includes the late steps of the pathway. ERG6 catalyzes the methyl transfer from S-adenosyl-methionine to the C-24 of zymosterol to form fecosterol. The third module or late pathway involves the ergosterol synthesis itself through consecutive reactions that mainly occur in the endoplasmic reticulum (ER) membrane. Firstly, the squalene synthase ERG9 catalyzes the condensation of 2 farnesyl pyrophosphate moieties to form squalene, which is the precursor of all steroids. Squalene synthase is crucial for balancing the incorporation of farnesyl diphosphate (FPP) into sterol and nonsterol isoprene synthesis. Secondly, the squalene epoxidase ERG1 catalyzes the stereospecific oxidation of squalene to (S)-2,3-epoxysqualene, which is considered to be a rate-limiting enzyme in steroid biosynthesis. Then, the lanosterol synthase ERG7 catalyzes the cyclization of (S)-2,3 oxidosqualene to lanosterol, a reaction that forms the sterol core. In the next steps, lanosterol is transformed to zymosterol through a complex process involving various demethylation, reduction and desaturation reactions. The lanosterol 14-alpha-demethylase ERG11 (also known as CYP51) catalyzes C14-demethylation of lanosterol to produce 4,4'-dimethyl cholesta-8,14,24-triene-3-beta-ol, which is critical for ergosterol biosynthesis. The C-14 reductase ERG24 reduces the C14=C15 double bond of 4,4-dimethyl-cholesta-8,14,24-trienol to produce 4,4-dimethyl-cholesta-8,24-dienol. 4,4-dimethyl-cholesta-8,24-dienol is substrate of the C-4 demethylation complex ERG25-ERG26-ERG27 in which ERG25 catalyzes the three-step monooxygenation required for the demethylation of 4,4-dimethyl and 4alpha-methylsterols, ERG26 catalyzes the oxidative decarboxylation that results in a reduction of the 3-beta-hydroxy group at the C-3 carbon to an oxo group, and ERG27 is responsible for the reduction of the keto group on the C-3. ERG28 has a role as a scaffold to help anchor ERG25, ERG26 and ERG27 to the endoplasmic reticulum and ERG29 regulates the activity of the iron-containing C4-methylsterol oxidase ERG25. Then, the sterol 24-C-methyltransferase ERG6 catalyzes the methyl transfer from S-adenosyl-methionine to the C-24 of zymosterol to form fecosterol. The C-8 sterol isomerase ERG2 catalyzes the reaction which results in unsaturation at C-7 in the B ring of sterols and thus converts fecosterol to episterol. The sterol-C5-desaturase ERG3 then catalyzes the introduction of a C-5 double bond in the B ring to produce 5-dehydroepisterol. The C-22 sterol desaturase ERG5 further converts 5-dehydroepisterol into ergosta-5,7,22,24(28)-tetraen-3beta-ol by forming the C-22(23) double bond in the sterol side chain. Finally, ergosta-5,7,22,24(28)-tetraen-3beta-ol is substrate of the C-24(28) sterol reductase ERG4 to produce ergosterol. The chain is Sterol 24-C-methyltransferase ERG6 from Saccharomyces cerevisiae (strain ATCC 204508 / S288c) (Baker's yeast).